Consider the following 153-residue polypeptide: 6,7-dimethyl-8-ribityllumazine synthase (153 aa).

Residues Phe-21, 55-57, and 79-81 each bind 5-amino-6-(D-ribitylamino)uracil; these read AFE and CVI. 84–85 provides a ligand contact to (2S)-2-hydroxy-3-oxobutyl phosphate; sequence AT. The active-site Proton donor is the His-87. Phe-112 contacts 5-amino-6-(D-ribitylamino)uracil. A (2S)-2-hydroxy-3-oxobutyl phosphate-binding site is contributed by Arg-126.

Belongs to the DMRL synthase family. As to quaternary structure, forms an icosahedral capsid composed of 60 subunits, arranged as a dodecamer of pentamers.

The catalysed reaction is (2S)-2-hydroxy-3-oxobutyl phosphate + 5-amino-6-(D-ribitylamino)uracil = 6,7-dimethyl-8-(1-D-ribityl)lumazine + phosphate + 2 H2O + H(+). It participates in cofactor biosynthesis; riboflavin biosynthesis; riboflavin from 2-hydroxy-3-oxobutyl phosphate and 5-amino-6-(D-ribitylamino)uracil: step 1/2. Its function is as follows. Catalyzes the formation of 6,7-dimethyl-8-ribityllumazine by condensation of 5-amino-6-(D-ribitylamino)uracil with 3,4-dihydroxy-2-butanone 4-phosphate. This is the penultimate step in the biosynthesis of riboflavin. The sequence is that of 6,7-dimethyl-8-ribityllumazine synthase from Staphylococcus epidermidis (strain ATCC 35984 / DSM 28319 / BCRC 17069 / CCUG 31568 / BM 3577 / RP62A).